A 231-amino-acid polypeptide reads, in one-letter code: MAAFPNLNSGSGLKKLDEHLLTRSYITGYQASKDDITVFTALSKPPTSEFVNVSRWFNHIDALLRISGVSAEGSGVIVEGSSPITEEAVATPPAADSKDTAAEEEDDDDVDLFGEETEEEKKAAEERAASVKASTKKKESGKSSVLMDIKPWDDETDMKKLEEAVRSIQMEGLFWGASKLVPVGYGIKKLHIMCTIVDDLVSIDTMIEEQLTVEPINEYVQSCDIVAFNKI.

The residue at position 2 (A2) is an N-acetylalanine. Residues 11–73 (SGLKKLDEHL…LRISGVSAEG (63 aa)) enclose the GST C-terminal domain. The disordered stretch occupies residues 82–136 (SPITEEAVATPPAADSKDTAAEEEDDDDVDLFGEETEEEKKAAEERAASVKASTK). Residues 102–118 (AEEEDDDDVDLFGEETE) show a composition bias toward acidic residues. Positions 119–129 (EEKKAAEERAA) are enriched in basic and acidic residues.

This sequence belongs to the EF-1-beta/EF-1-delta family. EF-1 is composed of 4 subunits: alpha, beta (1B-alpha=beta'), delta (1B-beta), and gamma (1B-gamma).

Its function is as follows. EF-1-beta and EF-1-delta stimulate the exchange of GDP bound to EF-1-alpha to GTP. The chain is Elongation factor 1-delta 2 from Arabidopsis thaliana (Mouse-ear cress).